Here is a 268-residue protein sequence, read N- to C-terminus: Zinc transporter ZupT (268 aa).

5 helical membrane-spanning segments follow: residues leucine 6–phenylalanine 26, serine 37–phenylalanine 57, threonine 70–isoleucine 90, glycine 125–valine 145, and serine 152–valine 172. Fe(2+) is bound by residues asparagine 136 and glutamate 139. Residues glutamate 139 and histidine 164 each contribute to the Zn(2+) site. Fe(2+)-binding residues include asparagine 165, glutamate 168, and glutamate 197. Glutamate 168 lines the Zn(2+) pocket. Helical transmembrane passes span alanine 201 to phenylalanine 221 and methionine 248 to alanine 268.

It belongs to the ZIP transporter (TC 2.A.5) family. ZupT subfamily.

It is found in the cell membrane. It carries out the reaction Zn(2+)(in) = Zn(2+)(out). In terms of biological role, mediates zinc uptake. May also transport other divalent cations. In Oceanobacillus iheyensis (strain DSM 14371 / CIP 107618 / JCM 11309 / KCTC 3954 / HTE831), this protein is Zinc transporter ZupT.